Here is a 207-residue protein sequence, read N- to C-terminus: Ribosomal RNA small subunit methyltransferase G (207 aa).

S-adenosyl-L-methionine contacts are provided by residues Gly77, Phe82, 100 to 102 (ERS), and Arg141.

Belongs to the methyltransferase superfamily. RNA methyltransferase RsmG family.

The protein localises to the cytoplasm. Functionally, specifically methylates the N7 position of a guanine in 16S rRNA. The protein is Ribosomal RNA small subunit methyltransferase G of Borrelia hermsii (strain HS1 / DAH).